Here is a 419-residue protein sequence, read N- to C-terminus: MSITGIKGFNDLLPAESGLWQFIEQTARQVFARYGFNEIRVPIVEKTELFCRSIGDTTDIVEKEMYTFMDKGGSSLTLRPEGTASVMRALIEHKLYALDSINKLYYMGPMFRHERPQKGRYRQFHQIGAEVTGAADPLIDAQVLLMVSRLFQEFGLTEPRLQINSLGCPACRPAYRQALVAFLAERQEALCEDCRRRQGTNPLRALDCKVPGCIEATQGAPAMVEHLCNECDQHFSMVQNYLTAAEVPFSLNPRMVRGLDYYTRTTFELVTGLLGAQSAVAAGGRYDGLVEQLGGPAVPGIGFALGVERVALLLGDRSFEKTPDLFIAVMGDAARTAGFRLMAALQDQGFWVETDCEGKSLKSQMRRADKLKSRYSIVLGDTELVAGSGTLKRMADGNQQPVHLEAATIAAAITGGGQT.

Belongs to the class-II aminoacyl-tRNA synthetase family. In terms of assembly, homodimer.

The protein localises to the cytoplasm. The catalysed reaction is tRNA(His) + L-histidine + ATP = L-histidyl-tRNA(His) + AMP + diphosphate + H(+). The sequence is that of Histidine--tRNA ligase from Trichlorobacter lovleyi (strain ATCC BAA-1151 / DSM 17278 / SZ) (Geobacter lovleyi).